We begin with the raw amino-acid sequence, 831 residues long: Prickle-like protein 1 (831 aa).

The PET domain maps to 14 to 122 (FGCQRSSTSD…TIKLLSRAVM (109 aa)). LIM zinc-binding domains lie at 124–189 (AVCE…LLKP), 189–249 (PRCS…LYAE), and 249–313 (EYCE…EDVH). The interval 313–342 (HASDSSDSAFQSARSRDSRRSVRMGKSSRS) is disordered. Phosphoserine is present on residues Ser315, Ser591, and Ser594. 2 disordered regions span residues 663-688 (FEER…NALN) and 763-831 (CSSS…CIIS). The segment covering 669-680 (RSHHHRRRRSRK) has biased composition (basic residues). Phosphoserine is present on Ser683. The segment covering 815-831 (TKSKKKKGHKGKNCIIS) has biased composition (basic residues). Cys828 carries the cysteine methyl ester modification. Cys828 carries the S-farnesyl cysteine lipid modification. Positions 829–831 (IIS) are cleaved as a propeptide — removed in mature form.

Belongs to the prickle / espinas / testin family. Interacts with REST. Expressed at highest levels in placenta and at lower levels in lung, liver, kidney and pancreas. Expressed in thalamus, hippocampus, cerebral cortex, and cerebellum (in neurons rather than glia).

It is found in the nucleus membrane. The protein localises to the cytoplasm. Its subcellular location is the cytosol. In terms of biological role, involved in the planar cell polarity pathway that controls convergent extension during gastrulation and neural tube closure. Convergent extension is a complex morphogenetic process during which cells elongate, move mediolaterally, and intercalate between neighboring cells, leading to convergence toward the mediolateral axis and extension along the anteroposterior axis. Necessary for nuclear localization of REST. May serve as nuclear receptor. The sequence is that of Prickle-like protein 1 (PRICKLE1) from Homo sapiens (Human).